A 1117-amino-acid chain; its full sequence is Protein cup (1117 aa).

Residues 1–106 (MQMAEAEQEN…PPPPPPLPTS (106 aa)) are disordered. Composition is skewed to pro residues over residues 54 to 64 (YPPPPPPPTPV) and 95 to 104 (CAPPPPPPLP). Phosphoserine occurs at positions 263 and 270. A disordered region spans residues 270–326 (SPRKQVASKEAVPEQQSSQVQQKRPPSTGIHKPGSLRAPKAVRPTTAPVVSSKPVKS). The span at 283-294 (EQQSSQVQQKRP) shows a compositional bias: polar residues. The YXXXXLphi motif 1 motif lies at 327–333 (YTRSRLM). 2 positions are modified to phosphoserine: Ser-347 and Ser-350. The short motif at 363–369 (ELEGRLR) is the YXXXXLphi motif 2 element. Disordered regions lie at residues 493–528 (ISSQ…EDLS), 596–618 (KEGN…KMDH), 654–673 (TEHQ…SFQF), 679–728 (SQQN…SSSS), 984–1004 (GAKH…QARP), and 1016–1051 (ISGG…FQSF). Thr-503 carries the phosphothreonine modification. A phosphoserine mark is found at Ser-509, Ser-513, Ser-520, Ser-523, and Ser-524. 2 stretches are compositionally biased toward low complexity: residues 679-712 (SQQN…NTNN) and 988-1001 (QAQQ…QQRQ).

It belongs to the 4E-T/EIF4E-T family. Component of the osk RNP complex, which is composed of at least exu, yps, aret/bruno, cup, and the mRNA of osk. Interacts with the decapping activators me31B and tral. Component of the nanos RNP complex, which is composed of at least smg, cup, tral, me31B, the CCR4-NOT complex members Rga/NOT2 and Caf1, and the mRNA of nanos (nos). Interacts with btz. Recruited to the 3'-UTR of nos and osk mRNAs by smg and btz, respectively. Forms a ribonucleoprotein complex (RNP) containing at least me31B, eIF4E1, cup, tral and pAbp; this interaction is required for the translational silencing of maternal mRNAs during the maternal-to-zygotic transition. No interaction was detected with pAbp in 1-5 hour embryos. Interacts with osk and vas. Interacts with Pop2, twin/CCR4, Rga, Not3 and Not1 which are all core components of the CCR4-NOT deadenylase complex; interaction with the complex is required for cup deadenylation activity. Interacts with nanos. Interacts with smg. Interacts (via YXXXXLphi motifs) with eIF4E1; the interaction promotes retention of cup in the cytoplasm. Interacts with orb; the interaction represses the orb positive autoregulatory loop. Interacts with Nup154. In terms of tissue distribution, predominantly expressed in ovaries and in 0-2 hours old embryos. Weakly expressed in testis. Expressed in young embryos through stage 9, then it decreases throughout the rest of embryogenesis. In ovaries, it is expressed in germ cells throughout pre-vitellogenic development, but is not expressed in the somatic follicle cells. In germarial cysts, the protein (and not the transcripts) is transported selectively into the oocyte.

It localises to the cytoplasm. It is found in the nucleus. Its subcellular location is the cytoplasmic ribonucleoprotein granule. Adapter protein that plays a central role in localization of transcripts in the oocyte and in young embryos. Maintains RNA targets in a repressed state by promoting their deadenylation and protects deadenylated mRNAs from further degradation. Binds to and recruits eIF-4E to the 3'-UTR of some mRNA targets which prevents interaction between eIF4E1 and eIF4G. This may contribute to translational repression but does not appear to be necessary for it to occur. Can promote translational repression independently of deadenylation and eIF4E1 binding. Required for correct localization of eIF4E1 in the developing oocyte. Required for translational repression of oskar (osk) mRNA. Also required for the translational repression of nanos (nos) mRNA. Promotes the accumulation of the germ plasm components osk, vas and stau at the posterior pole of the oocyte and is required for germ cell development. Represses orb positive autoregulatory activity which prevents premature activation of orb and ensures its accumulation specifically in the developing oocyte. In 0-1 hour embryos, forms a complex with me31B, cup, tral and pAbp which binds to various mRNAs including maternal mRNAs, and down-regulates their expression during the maternal-to-zygotic transition. In Drosophila melanogaster (Fruit fly), this protein is Protein cup (cup).